The chain runs to 2155 residues: Alpha-tectorin (2155 aa).

Residues M1–A22 form the signal peptide. N-linked (GlcNAc...) asparagine glycans are attached at residues N34, N187, N215, N278, N455, N506, N528, and N560. An NIDO domain is found at P98–K252. The VWFC domain occupies C260–C314. Positions S320–D500 constitute a VWFD 1 domain. Cystine bridges form between C322–C461 and C344–C499. One can recognise a TIL 1 domain in the interval C597–C650. N670, N687, N813, N843, N855, N898, N920, N931, and N949 each carry an N-linked (GlcNAc...) asparagine glycan. The region spanning T711–N886 is the VWFD 2 domain. C713 and C849 are joined by a disulfide. The TIL 2 domain occupies C984–C1036. 3 N-linked (GlcNAc...) asparagine glycosylation sites follow: N1048, N1235, and N1364. The VWFD 3 domain maps to A1098–Q1278. Cystine bridges form between C1100–C1241 and C1122–C1277. Positions C1372–C1425 constitute a TIL 3 domain. The 182-residue stretch at S1485–N1666 folds into the VWFD 4 domain. Disulfide bonds link C1487–C1622, C1509–C1665, C1717–C1775, C1741–C1784, C1786–C1818, C1806–C1898, and C1837–C1857. 10 N-linked (GlcNAc...) asparagine glycosylation sites follow: N1538, N1565, N1756, N1772, N1794, N1851, N1864, N1880, N1920, and N1939. One can recognise a ZP domain in the interval T1805 to N2059. 3 disulfide bridges follow: C1980/C2040, C2001/C2056, and C2045/C2052. The GPI-anchor amidated asparagine moiety is linked to residue N2091. Residues G2092–S2155 constitute a propeptide, removed in mature form.

In terms of assembly, may form homomeric filament after self-association or heteromeric filament after association with beta-tectorin. Interacts with CEACAM16. In terms of processing, the presence of a hydrophobic C-terminus preceded by a potential cleavage site strongly suggests that tectorins are synthesized as glycosylphosphatidylinositol-linked, membrane-bound precursors. Tectorins are targeted to the apical surface of the inner ear epithelia by the lipid and proteolytically released into the extracellular compartment.

The protein localises to the cell membrane. The protein resides in the secreted. Its subcellular location is the extracellular space. It localises to the extracellular matrix. One of the major non-collagenous components of the tectorial membrane. The tectorial membrane is an extracellular matrix of the inner ear that covers the neuroepithelium of the cochlea and contacts the stereocilia bundles of specialized sensory hair cells. Sound induces movement of these hair cells relative to the tectorial membrane, deflects the stereocilia and leads to fluctuations in hair-cell membrane potential, transducing sound into electrical signals. This chain is Alpha-tectorin (TECTA), found in Homo sapiens (Human).